The sequence spans 220 residues: Germin-like protein subfamily T member 2 (220 aa).

The signal sequence occupies residues 1-27; it reads MTTLQISSSLFRSFLLVICVFVIPSLS. Cysteines 37 and 52 form a disulfide. Residues 64–212 enclose the Cupin type-1 domain; that stretch reads SGLGGPLNTS…TFRTDDVTVN (149 aa). N71 carries N-linked (GlcNAc...) asparagine glycosylation. Mn(2+) contacts are provided by H112, H114, and E119. An N-linked (GlcNAc...) asparagine glycan is attached at N136. H158 is a binding site for Mn(2+).

Belongs to the germin family. Oligomer (believed to be a pentamer but probably hexamer).

The protein resides in the secreted. It is found in the extracellular space. It localises to the apoplast. In terms of biological role, may play a role in plant defense. Probably has no oxalate oxidase activity even if the active site is conserved. The protein is Germin-like protein subfamily T member 2 of Arabidopsis thaliana (Mouse-ear cress).